Here is a 347-residue protein sequence, read N- to C-terminus: Metacaspase-2 (347 aa).

The interval 1–70 is regulates substrate access to the active site; it reads MCSLITQLCD…QPWVATPLPG (70 aa). H158 is an active-site residue. Residues D173, D189, and D190 each contribute to the Ca(2+) site. C213 is an active-site residue. D220 is a binding site for Ca(2+).

Belongs to the peptidase C14B family. In terms of assembly, monomer. Post-translationally, auto-proteolytic cleavage of the propeptide after Lys-55 and between the large and small subunits after Lys-268 is required for catalytic activity towards large protein substrates but is dispensable towards small oligopeptide substrates. After processing, the propeptide and the large and small subunits remain associated by non-covalent bonds. In vivo, the unprocessed enzyme appears to be the predominant form.

It is found in the recycling endosome. With respect to regulation, activated by Ca(2+). In response to calcium binding, the 280-loop, the 280-loop, a disordered loop consisting of residues 269-275, undergoes a conformational change which stabilizes substrates in the active site. The binding to the substrate triggers the release of the N-terminal region resulting in the activation of the enzyme. Proteolytic cleavage is required for catalytic activity towards large protein substrates. Its function is as follows. Cysteine protease that cleaves specifically after arginine or lysine residues. The protein is Metacaspase-2 of Trypanosoma brucei brucei.